The following is a 291-amino-acid chain: Phytanoyl-CoA dioxygenase domain-containing protein 1 (291 aa).

Threonine 55 carries the post-translational modification Phosphothreonine. Residues lysine 102, methionine 141, 156–158 (HQD), and tryptophan 174 contribute to the 2-oxoglutarate site. Fe cation-binding residues include histidine 156 and aspartate 158. A Fe cation-binding site is contributed by histidine 246. Residues serine 248 and arginine 257 each contribute to the 2-oxoglutarate site.

This sequence belongs to the PhyH family. PHYHD1 subfamily. Fe cation serves as cofactor.

In terms of biological role, 2-oxoglutarate(2OG)-dependent dioxygenase that catalyzes the conversion of 2-oxoglutarate to succinate and CO(2) in an iron-dependent manner. However, does not couple 2OG turnover to the hydroxylation of acyl-coenzyme A derivatives, implying that it is not directly involved in phytanoyl coenzyme-A metabolism. Does not show detectable activity towards fatty acid CoA thioesters. The protein is Phytanoyl-CoA dioxygenase domain-containing protein 1 of Mus musculus (Mouse).